The primary structure comprises 58 residues: Small ribosomal subunit protein bS21 (58 aa).

The interval 35–58 (REHYEKPSVKKKKKSEAARKRKFK) is disordered. Residues 43-58 (VKKKKKSEAARKRKFK) are compositionally biased toward basic residues.

It belongs to the bacterial ribosomal protein bS21 family.

The polypeptide is Small ribosomal subunit protein bS21 (Clostridium botulinum (strain Alaska E43 / Type E3)).